Consider the following 383-residue polypeptide: Activator of 90 kDa heat shock protein ATPase homolog (383 aa).

Disordered stretches follow at residues 97 to 126 (KKVL…KPAE) and 209 to 228 (EQSQ…TTTN).

Belongs to the AHA1 family. As to quaternary structure, interacts with hspD/HSP90.

It is found in the cytoplasm. Its function is as follows. Co-chaperone that stimulates hspD/HSP90 ATPase activity. The protein is Activator of 90 kDa heat shock protein ATPase homolog (ahsa) of Dictyostelium discoideum (Social amoeba).